The sequence spans 496 residues: Sporulation-killing factor biosynthesis protein SkfC (496 aa).

The next 7 helical transmembrane spans lie at 1–21, 224–244, 248–268, 291–311, 331–351, 399–419, and 443–463; these read MNSL…LLFI, VSGM…LVFM, TSII…SLTL, LLGI…VFIC, IVQI…TSLL, LLMI…IIVS, and FIFG…CVLV.

It is found in the membrane. Required for production of the bacteriocin SkfA. The sequence is that of Sporulation-killing factor biosynthesis protein SkfC from Bacillus subtilis (strain 168).